The chain runs to 126 residues: Protein ApaG (126 aa).

Residues 2–126 (SQVESPIKIK…FRLAVPGIFQ (125 aa)) enclose the ApaG domain.

This Shewanella frigidimarina (strain NCIMB 400) protein is Protein ApaG.